The chain runs to 242 residues: Carboxy-S-adenosyl-L-methionine synthase (242 aa).

Residues Tyr38, 63-65 (GCS), 88-89 (DN), 116-117 (DL), and Arg199 contribute to the S-adenosyl-L-methionine site.

It belongs to the class I-like SAM-binding methyltransferase superfamily. Cx-SAM synthase family. In terms of assembly, homodimer.

The catalysed reaction is prephenate + S-adenosyl-L-methionine = carboxy-S-adenosyl-L-methionine + 3-phenylpyruvate + H2O. In terms of biological role, catalyzes the conversion of S-adenosyl-L-methionine (SAM) to carboxy-S-adenosyl-L-methionine (Cx-SAM). The chain is Carboxy-S-adenosyl-L-methionine synthase from Methylococcus capsulatus (strain ATCC 33009 / NCIMB 11132 / Bath).